The sequence spans 310 residues: Proline-rich 28 kDa antigen (310 aa).

A signal peptide spans 1-32; sequence MIQIARTWRVFAGGMATGFIGVVLVTAGKASA. A disordered region spans residues 278-310; the sequence is QAPAPAPGSAPVGLPGQAPGYPPAGTLTPVPPR.

It to M.leprae ML0031.

The chain is Proline-rich 28 kDa antigen (mtc28) from Mycobacterium bovis (strain ATCC BAA-935 / AF2122/97).